The following is a 267-amino-acid chain: Phosphate import ATP-binding protein PstB 2 (267 aa).

Residues 21–262 enclose the ABC transporter domain; that stretch reads LSTKDLHVYY…AKLQSTSDYV (242 aa). 53 to 60 provides a ligand contact to ATP; the sequence is GPSGCGKS.

This sequence belongs to the ABC transporter superfamily. Phosphate importer (TC 3.A.1.7) family. As to quaternary structure, the complex is composed of two ATP-binding proteins (PstB), two transmembrane proteins (PstC and PstA) and a solute-binding protein (PstS).

It is found in the cell membrane. The enzyme catalyses phosphate(out) + ATP + H2O = ADP + 2 phosphate(in) + H(+). Its function is as follows. Part of the ABC transporter complex PstSACB involved in phosphate import. Responsible for energy coupling to the transport system. This Streptococcus mutans serotype c (strain ATCC 700610 / UA159) protein is Phosphate import ATP-binding protein PstB 2.